The sequence spans 282 residues: Putative SWIB domain-containing protein 070L (282 aa).

A compositionally biased stretch (low complexity) spans 1–16; the sequence is MFQTTPKQVKPTTVPK. The disordered stretch occupies residues 1–21; that stretch reads MFQTTPKQVKPTTVPKTGRKN. Residues 97–181 enclose the SWIB/MDM2 domain; sequence GLEKPRMISE…QKYLKHCFDE (85 aa). Residues 199–282 are disordered; sequence TDDQTTAEEA…KVKKEHKIKK (84 aa). Positions 262 to 275 are enriched in basic and acidic residues; that stretch reads GKKDKENIPLEKVK.

The protein belongs to the IIV-6 306R family.

The chain is Putative SWIB domain-containing protein 070L from Invertebrate iridescent virus 3 (IIV-3).